The sequence spans 199 residues: Dephospho-CoA kinase (199 aa).

The 197-residue stretch at 3-199 folds into the DPCK domain; that stretch reads TLGVTGGIGS…ELYWAVTGGQ (197 aa). 11–16 is an ATP binding site; it reads GSGKTT.

The protein belongs to the CoaE family.

The protein resides in the cytoplasm. The catalysed reaction is 3'-dephospho-CoA + ATP = ADP + CoA + H(+). It participates in cofactor biosynthesis; coenzyme A biosynthesis; CoA from (R)-pantothenate: step 5/5. In terms of biological role, catalyzes the phosphorylation of the 3'-hydroxyl group of dephosphocoenzyme A to form coenzyme A. In Salinibacter ruber (strain DSM 13855 / M31), this protein is Dephospho-CoA kinase.